We begin with the raw amino-acid sequence, 1778 residues long: Nuclear receptor corepressor 1 (1778 aa).

The SANT domain occupies 125-176 (DRLEEWSPEERSLFKSRQADHVKIFHGLTEFFVDKTASDLVLFYYMNKKTED). The 43-residue stretch at 356 to 398 (WTDDEKTKLVTLINSSPTLDWVSISEGMNRRPNECKMQYDAMN) folds into the Myb-like domain. Residues 409-421 (VDEEDGNGQEEGG) are compositionally biased toward acidic residues. 6 disordered regions span residues 409–671 (VDEE…TVST), 992–1024 (SLTPSETSASATPPAHRPRAATTVGSKMPAGRS), 1195–1218 (KLQQQHQDAQKRKLEAPVSSATPQ), 1276–1339 (QHLQ…SRSV), 1414–1434 (PPKTPASIKRLQPTEGPRTLS), and 1646–1718 (AAPT…PPLP). Composition is skewed to low complexity over residues 431-442 (SSAAARRSGLAR) and 450-469 (TPRAPRSAGGRRTGGAVTRA). The span at 478–493 (DLGEEIDEMEIEDNDE) shows a compositional bias: acidic residues. Residues 494 to 513 (DASRGSRGKDSKAPSDRDGS) show a composition bias toward basic and acidic residues. 2 stretches are compositionally biased toward acidic residues: residues 517-545 (MEGDSPEGQDQDADQDQDQDQDVDEEEEE) and 599-616 (ESDDGEEDNDILEIDVDE). Low complexity-rich tracts occupy residues 626–639 (SSSSHLIGSSSVGG) and 649–671 (LVQQQQQQQPQAQSAAPPVTVST). The span at 1276-1285 (QHLQQQQQHH) shows a compositional bias: low complexity. The span at 1687 to 1696 (SSVNSNVSDV) shows a compositional bias: low complexity.

Belongs to the N-CoR nuclear receptor corepressors family. Interacts with gex-3. Interacts (via C-terminus) with nhr-60. In larvae, expressed in pharyngeal neurons, ventral and dorsal nerve cords, tail neurons, egg-laying neurons and egg-laying muscles. Detected in the neurons of the pharyngeal nerve ring, head neurons, tail neurons and egg-laying muscles in adults. Detected in male-specific tail ganglia and rays in males.

The protein resides in the nucleus. Its function is as follows. Mediates transcriptional repression by certain nuclear receptors. Plays a role in development and neuronal function. May play a role in muscle-specific oxidative mitochondrial metabolism. This chain is Nuclear receptor corepressor 1, found in Caenorhabditis elegans.